A 78-amino-acid chain; its full sequence is Large ribosomal subunit protein bL28 (78 aa).

It belongs to the bacterial ribosomal protein bL28 family.

The protein is Large ribosomal subunit protein bL28 of Psychrobacter arcticus (strain DSM 17307 / VKM B-2377 / 273-4).